Here is a 215-residue protein sequence, read N- to C-terminus: Probable phosphoglycerate mutase GpmB (215 aa).

Substrate-binding positions include 8–15 (RHGETVWN), 21–22 (QG), Arg-58, 82–85 (ELNM), and 151–152 (GM). His-9 serves as the catalytic Tele-phosphohistidine intermediate. Glu-82 functions as the Proton donor/acceptor in the catalytic mechanism.

This sequence belongs to the phosphoglycerate mutase family. GpmB subfamily.

The enzyme catalyses (2R)-2-phosphoglycerate = (2R)-3-phosphoglycerate. Its pathway is carbohydrate degradation; glycolysis; pyruvate from D-glyceraldehyde 3-phosphate: step 3/5. The polypeptide is Probable phosphoglycerate mutase GpmB (Yersinia enterocolitica serotype O:8 / biotype 1B (strain NCTC 13174 / 8081)).